Consider the following 436-residue polypeptide: Serine--tRNA ligase (436 aa).

An L-serine-binding site is contributed by 242-244; it reads TAE. Residue 273–275 coordinates ATP; that stretch reads RSE. L-serine is bound at residue E296. 360 to 363 is a binding site for ATP; sequence EISS. S395 provides a ligand contact to L-serine.

Belongs to the class-II aminoacyl-tRNA synthetase family. Type-1 seryl-tRNA synthetase subfamily. As to quaternary structure, homodimer. The tRNA molecule binds across the dimer.

Its subcellular location is the cytoplasm. The enzyme catalyses tRNA(Ser) + L-serine + ATP = L-seryl-tRNA(Ser) + AMP + diphosphate + H(+). The catalysed reaction is tRNA(Sec) + L-serine + ATP = L-seryl-tRNA(Sec) + AMP + diphosphate + H(+). Its pathway is aminoacyl-tRNA biosynthesis; selenocysteinyl-tRNA(Sec) biosynthesis; L-seryl-tRNA(Sec) from L-serine and tRNA(Sec): step 1/1. In terms of biological role, catalyzes the attachment of serine to tRNA(Ser). Is also able to aminoacylate tRNA(Sec) with serine, to form the misacylated tRNA L-seryl-tRNA(Sec), which will be further converted into selenocysteinyl-tRNA(Sec). The polypeptide is Serine--tRNA ligase (Polynucleobacter asymbioticus (strain DSM 18221 / CIP 109841 / QLW-P1DMWA-1) (Polynucleobacter necessarius subsp. asymbioticus)).